A 163-amino-acid chain; its full sequence is Phospholipase A2 homolog 3 (163 aa).

Residues 1 to 43 (MARGGSFSRLRLRAGVVVAAAAAALLLFAVVAPPAAALNIGLQ) form the signal peptide. Cystine bridges form between cysteine 55/cysteine 83, cysteine 59/cysteine 89, cysteine 64/cysteine 137, cysteine 76/cysteine 96, cysteine 95/cysteine 121, and cysteine 102/cysteine 114. Ca(2+) contacts are provided by tyrosine 75, glycine 77, and tyrosine 80. Residue histidine 99 is part of the active site. Ca(2+) is bound at residue aspartate 100.

Belongs to the phospholipase A2 family. The cofactor is Ca(2+).

It is found in the secreted. The enzyme catalyses a 1,2-diacyl-sn-glycero-3-phosphocholine + H2O = a 1-acyl-sn-glycero-3-phosphocholine + a fatty acid + H(+). Its activity is regulated as follows. Inhibited by EGTA. Functionally, PA2 catalyzes the calcium-dependent hydrolysis of the 2-acyl groups in 3-sn-phosphoglycerides. Releases lysophospholipids (LPLs) and free fatty acids (FFAs) from membrane phospholipids in response to hormones and other external stimuli. The chain is Phospholipase A2 homolog 3 (PLA2-III) from Oryza sativa subsp. japonica (Rice).